Consider the following 139-residue polypeptide: Transmembrane protein 250 (139 aa).

The next 2 membrane-spanning stretches (helical) occupy residues Phe-56–Leu-76 and Val-116–Phe-136.

(Microbial infection) Interacts with herpes simplex virus 1/HHV-1 protein CVC2/UL25.

It localises to the membrane. Its subcellular location is the nucleus. The protein resides in the cytoplasm. May play a role in cell proliferation by promoting progression into S phase. In terms of biological role, (Microbial infection) Promotes human herpes simplex virus 1/HHV-1 proliferation. In Homo sapiens (Human), this protein is Transmembrane protein 250.